The following is a 153-amino-acid chain: Peptide deformylase (153 aa).

Fe cation is bound by residues Cys-87 and His-129. Glu-130 is a catalytic residue. Fe cation is bound at residue His-133.

The protein belongs to the polypeptide deformylase family. Fe(2+) serves as cofactor.

It carries out the reaction N-terminal N-formyl-L-methionyl-[peptide] + H2O = N-terminal L-methionyl-[peptide] + formate. Its function is as follows. Removes the formyl group from the N-terminal Met of newly synthesized proteins. Requires at least a dipeptide for an efficient rate of reaction. N-terminal L-methionine is a prerequisite for activity but the enzyme has broad specificity at other positions. In Dictyoglomus turgidum (strain DSM 6724 / Z-1310), this protein is Peptide deformylase.